The sequence spans 71 residues: MVNVLKGVLIECDPAMKQFLLYLDEANALGKKFIIQDIDDTHVFVIAELVNVLQERVGELMDQNAFSLTQK.

Phosphothreonine is present on threonine 69.

The protein belongs to the TFB5 family. Component of the 7-subunit TFIIH core complex composed of XPB/ERCC3, XPD/ERCC2, GTF2H1, GTF2H2, GTF2H3, GTF2H4 and GTF2H5, which is active in NER. The core complex associates with the 3-subunit CDK-activating kinase (CAK) module composed of CCNH/cyclin H, CDK7 and MNAT1 to form the 10-subunit holoenzyme (holo-TFIIH) active in transcription. Part of TBP-based Pol II pre-initiation complex (PIC), in which Pol II core assembles with general transcription factors and other specific initiation factors including GTF2E1, GTF2E2, GTF2F1, GTF2F2, TCEA1, ERCC2, ERCC3, GTF2H2, GTF2H3, GTF2H4, GTF2H5, GTF2A1, GTF2A2, GTF2B and TBP; this large multi-subunit PIC complex mediates DNA unwinding and targets Pol II core to the transcription start site where the first phosphodiester bond forms.

It is found in the nucleus. It localises to the cytoplasm. Functionally, component of the general transcription and DNA repair factor IIH (TFIIH) core complex, which is involved in general and transcription-coupled nucleotide excision repair (NER) of damaged DNA and, when complexed to CAK, in RNA transcription by RNA polymerase II. In NER, TFIIH acts by opening DNA around the lesion to allow the excision of the damaged oligonucleotide and its replacement by a new DNA fragment. In transcription, TFIIH has an essential role in transcription initiation. When the pre-initiation complex (PIC) has been established, TFIIH is required for promoter opening and promoter escape. Phosphorylation of the C-terminal tail (CTD) of the largest subunit of RNA polymerase II by the kinase module CAK controls the initiation of transcription. Necessary for the stability of the TFIIH complex and for the presence of normal levels of TFIIH in the cell. In Mus musculus (Mouse), this protein is General transcription factor IIH subunit 5.